Here is a 140-residue protein sequence, read N- to C-terminus: Large ribosomal subunit protein uL16 (140 aa).

The protein belongs to the universal ribosomal protein uL16 family. In terms of assembly, part of the 50S ribosomal subunit.

Its function is as follows. Binds 23S rRNA and is also seen to make contacts with the A and possibly P site tRNAs. The protein is Large ribosomal subunit protein uL16 of Phytoplasma australiense.